The sequence spans 247 residues: Anionic trypsin (247 aa).

The first 15 residues, 1–15, serve as a signal peptide directing secretion; the sequence is MNPLLILAFLGAAVA. Residues 16–23 constitute a propeptide, activation peptide; that stretch reads TPTDDDDK. The region spanning 24-244 is the Peptidase S1 domain; the sequence is IVGGYTCEEN…FVDWIQSTIA (221 aa). 6 disulfide bridges follow: Cys30/Cys160, Cys48/Cys64, Cys132/Cys233, Cys139/Cys206, Cys171/Cys185, and Cys196/Cys220. His63 (charge relay system) is an active-site residue. Positions 75, 77, 80, and 85 each coordinate Ca(2+). Asp107 functions as the Charge relay system in the catalytic mechanism. Ser200 (charge relay system) is an active-site residue.

The protein belongs to the peptidase S1 family. The cofactor is Ca(2+).

The protein resides in the secreted. It is found in the extracellular space. The catalysed reaction is Preferential cleavage: Arg-|-Xaa, Lys-|-Xaa.. This Canis lupus familiaris (Dog) protein is Anionic trypsin.